A 277-amino-acid chain; its full sequence is Glycerol-3-phosphate acyltransferase (277 aa).

Helical transmembrane passes span 3–23, 55–75, 79–99, 111–131, and 155–175; these read LFIF…AIIV, IMVM…AKLL, PVTV…PVFF, IGAL…TWLL, and LILV…ILVL. The disordered stretch occupies residues 207–277; sequence SPATSAEQEF…PKTKTVKEKE (71 aa). Positions 216 to 239 are enriched in basic and acidic residues; it reads FPGKEVIDTNIDETEKTEQAEAVK. Basic residues-rich tracts occupy residues 240–253 and 262–271; these read KPKA…AKKT and KPRSTKPKTK.

Belongs to the PlsY family. Probably interacts with PlsX.

It is found in the cell inner membrane. The enzyme catalyses an acyl phosphate + sn-glycerol 3-phosphate = a 1-acyl-sn-glycero-3-phosphate + phosphate. It functions in the pathway lipid metabolism; phospholipid metabolism. Functionally, catalyzes the transfer of an acyl group from acyl-phosphate (acyl-PO(4)) to glycerol-3-phosphate (G3P) to form lysophosphatidic acid (LPA). This enzyme utilizes acyl-phosphate as fatty acyl donor, but not acyl-CoA or acyl-ACP. In Legionella pneumophila (strain Paris), this protein is Glycerol-3-phosphate acyltransferase.